The sequence spans 2527 residues: Leucine-rich repeat serine/threonine-protein kinase 2 (2527 aa).

Residues 1 to 969 (MASGSCQGCE…RSSKLQSHMR (969 aa)) form a required for RAB29-mediated activation region. A coiled-coil region spans residues 319–348 (LTETIFLNQDLEEKNENQENDDEGEEDKLF). Residues serine 910, serine 935, serine 955, and serine 973 each carry the phosphoserine modification. LRR repeat units follow at residues 983–1004 (YITSLDLSANELRDIDALSQKC), 1012–1033 (HLEKLELHQNALTSFPQQLCET), 1036–1057 (SLTHLDLHSNKFTSFPSYLLKM), 1059–1080 (CIANLDVSRNDIGPSVVLDPTV), 1084–1105 (TLKQFNLSYNQLSFVPENLTDV), 1108–1129 (KLEQLILEGNKISGICSPLRLK), 1130–1150 (ELKILNLSKNHISSLSENFLE), 1156–1171 (ESFSARMNFLAAMPFL), 1174–1196 (SMTILKLSQNKFSCIPEAILNLP), 1197–1218 (HLRSLDMSSNDIQYLPGPAHWK), 1221–1245 (NLRELLFSHNQISILDLSEKAYLWS), 1246–1267 (RVEKLHLSHNKLKEIPPEIGCL), and 1269–1291 (NLTSLDVSYNLELRSFPNEMGKL). Phosphoserine; by autocatalysis is present on serine 1292. The 184-residue stretch at 1328–1511 (KAVPYNRMKL…KTIINESLNF (184 aa)) folds into the Roc domain. 1341-1348 (GNTGSGKT) serves as a coordination point for GTP. Serine 1444 is modified (phosphoserine). One can recognise a COR domain in the interval 1546–1740 (PVIDRKRLLQ…RMYWRQGIYL (195 aa)). Residues 1879 to 2138 (QAPEFLLGDG…FDILNSAELV (260 aa)) form the Protein kinase domain. 12 residues coordinate ATP: leucine 1885, aspartate 1887, glycine 1888, glycine 1891, valine 1893, alanine 1904, lysine 1906, methionine 1947, glutamate 1948, alanine 1950, serine 1954, and arginine 1957. Residue aspartate 1994 is the Proton acceptor of the active site. 4 residues coordinate ATP: histidine 1998, leucine 2001, alanine 2016, and aspartate 2017. 2098–2121 (EYGCAPWPMVEKLIKQCLKENPQE) lines the GTP pocket. WD repeat units lie at residues 2139 to 2183 (CLTR…SFLD), 2188 to 2228 (GYTS…LVIN), 2233 to 2276 (KKRH…AIFE), 2281 to 2327 (KLKG…FSFS), 2333 to 2377 (QKLI…EVWD), 2402 to 2438 (KESKHKMSYSGRVKTLCLQKNTALWIGTGGGHILLLD), and 2443 to 2497 (RLIR…TVWD). 2295–2298 (NVST) provides a ligand contact to GTP.

It belongs to the protein kinase superfamily. TKL Ser/Thr protein kinase family. As to quaternary structure, homodimer. Homotetramer; when activated by GTP-bound RAB29. Interacts with PRKN, PRDX3, and TPCN2. Interacts with VPS35. Interacts (via N-terminus) with RAB29; this interaction is direct and stimulates kinase activity. Interacts (via ROC domain) with SEC16A. Interacts with APP; interaction promotes phosphorylation of 'Thr-743' of APP. Interacts with MAPT. Interacts with RAB8A, RAB10, and RAB12. Interacts (via N-terminus) with RAB32. Interacts with YWHAG; this interaction is dependent on phosphorylation of Ser-910 and either Ser-935 or Ser-1444. Interacts with SFN; this interaction is dependent on phosphorylation of Ser-910 and/or Ser-935. The cofactor is Mg(2+). In terms of processing, autophosphorylated at Ser-1292; autophosphorylation is stimulated by RAB29. Phosphorylation of Ser-910 and either Ser-935 or Ser-1444 facilitates interaction with YWHAG. Phosphorylation of Ser-910 and/or Ser-935 facilitates interaction with SFN. Ubiquitinated by TRIM1; undergoes 'Lys-48'-linked polyubiquitination leading to proteasomal degradation. As to expression, expressed in pyramidal neurons in all cortical laminae of the visual cortex, in neurons of the substantia nigra pars compacta and caudate putamen (at protein level). Expressed in neutrophils (at protein level). Expressed in the brain. Expressed throughout the adult brain, but at a lower level than in heart and liver. Also expressed in placenta, lung, skeletal muscle, kidney and pancreas. In the brain, expressed in the cerebellum, cerebral cortex, medulla, spinal cord occipital pole, frontal lobe, temporal lobe and putamen. Expression is particularly high in brain dopaminoceptive areas.

It is found in the cytoplasmic vesicle. Its subcellular location is the perikaryon. The protein localises to the golgi apparatus membrane. The protein resides in the cell projection. It localises to the axon. It is found in the dendrite. Its subcellular location is the endoplasmic reticulum membrane. The protein localises to the secretory vesicle. The protein resides in the synaptic vesicle membrane. It localises to the endosome. It is found in the lysosome. Its subcellular location is the mitochondrion outer membrane. The protein localises to the cytoplasm. The protein resides in the cytoskeleton. It localises to the phagosome. The enzyme catalyses L-threonyl-[protein] + ATP = O-phospho-L-threonyl-[protein] + ADP + H(+). It carries out the reaction L-seryl-[protein] + ATP = O-phospho-L-seryl-[protein] + ADP + H(+). The catalysed reaction is GTP + H2O = GDP + phosphate + H(+). With respect to regulation, kinase activity is regulated by the GTPase activity of the ROC domain. GTP-bound LRRK2 kinase activity is stimulated by RAB29. Phosphorylation of RAB10 'Thr-73' is stimulated by RAB29 and RAB32. Inhibited by small molecule inhibitor MLi-2. Its function is as follows. Serine/threonine-protein kinase which phosphorylates a broad range of proteins involved in multiple processes such as neuronal plasticity, innate immunity, autophagy, and vesicle trafficking. Is a key regulator of RAB GTPases by regulating the GTP/GDP exchange and interaction partners of RABs through phosphorylation. Phosphorylates RAB3A, RAB3B, RAB3C, RAB3D, RAB5A, RAB5B, RAB5C, RAB8A, RAB8B, RAB10, RAB12, RAB29, RAB35, and RAB43. Regulates the RAB3IP-catalyzed GDP/GTP exchange for RAB8A through the phosphorylation of 'Thr-72' on RAB8A. Inhibits the interaction between RAB8A and GDI1 and/or GDI2 by phosphorylating 'Thr-72' on RAB8A. Regulates primary ciliogenesis through phosphorylation of RAB8A and RAB10, which promotes SHH signaling in the brain. Together with RAB29, plays a role in the retrograde trafficking pathway for recycling proteins, such as mannose-6-phosphate receptor (M6PR), between lysosomes and the Golgi apparatus in a retromer-dependent manner. Regulates neuronal process morphology in the intact central nervous system (CNS). Plays a role in synaptic vesicle trafficking. Plays an important role in recruiting SEC16A to endoplasmic reticulum exit sites (ERES) and in regulating ER to Golgi vesicle-mediated transport and ERES organization. Positively regulates autophagy through a calcium-dependent activation of the CaMKK/AMPK signaling pathway. The process involves activation of nicotinic acid adenine dinucleotide phosphate (NAADP) receptors, increase in lysosomal pH, and calcium release from lysosomes. Phosphorylates PRDX3. By phosphorylating APP on 'Thr-743', which promotes the production and the nuclear translocation of the APP intracellular domain (AICD), regulates dopaminergic neuron apoptosis. Acts as a positive regulator of innate immunity by mediating phosphorylation of RIPK2 downstream of NOD1 and NOD2, thereby enhancing RIPK2 activation. Independent of its kinase activity, inhibits the proteasomal degradation of MAPT, thus promoting MAPT oligomerization and secretion. In addition, has GTPase activity via its Roc domain which regulates LRRK2 kinase activity. Recruited by RAB29/RAB7L1 to overloaded lysosomes where it phosphorylates and stabilizes RAB8A and RAB10 which promote lysosomal content release and suppress lysosomal enlargement through the EHBP1 and EHBP1L1 effector proteins. This Homo sapiens (Human) protein is Leucine-rich repeat serine/threonine-protein kinase 2 (LRRK2).